We begin with the raw amino-acid sequence, 213 residues long: High frequency lysogenization protein HflD homolog (213 aa).

Residues 79-122 (QGLNAELTRYTLSLMVLERKLSSAKGALNTLGDRINGLQRQLDH) are a coiled coil.

This sequence belongs to the HflD family.

The protein resides in the cytoplasm. Its subcellular location is the cell inner membrane. The sequence is that of High frequency lysogenization protein HflD homolog from Salmonella dublin (strain CT_02021853).